A 524-amino-acid polypeptide reads, in one-letter code: Cytokinin dehydrogenase 4 (524 aa).

The first 26 residues, 1–26 (MTNTLCLSLITLITLFISLTPTLIKS), serve as a signal peptide directing secretion. Residues Asn-39 and Asn-58 are each glycosylated (N-linked (GlcNAc...) asparagine). The 190-residue stretch at 60–249 (TDENPGAVLC…TRARIALDHA (190 aa)) folds into the FAD-binding PCMH-type domain. Residues Ala-104, Gly-106, and Gly-108 each coordinate FAD. His-109 bears the Pros-8alpha-FAD histidine mark. FAD-binding residues include Ser-110 and Gln-114. An N-linked (GlcNAc...) asparagine glycan is attached at Asn-124. Asp-173, Ser-178, Ser-184, Ile-188, and Ile-239 together coordinate FAD. Asn-411 carries N-linked (GlcNAc...) asparagine glycosylation. Tyr-482, Ser-517, and Gln-520 together coordinate FAD.

Belongs to the oxygen-dependent FAD-linked oxidoreductase family. It depends on FAD as a cofactor. Expressed in trichomes and in developing stomata of young growing leaves. Strong expression in stipules and in the root cap, but not detected in the root meristem.

Its subcellular location is the secreted. It is found in the extracellular space. It carries out the reaction N(6)-dimethylallyladenine + A + H2O = 3-methyl-2-butenal + adenine + AH2. In terms of biological role, catalyzes the oxidation of cytokinins, a family of N(6)-substituted adenine derivatives that are plant hormones, where the substituent is an isopentenyl group. This Arabidopsis thaliana (Mouse-ear cress) protein is Cytokinin dehydrogenase 4 (CKX4).